Here is a 326-residue protein sequence, read N- to C-terminus: MGDTKVETISRLAQWRIENFGPCSFKKSDPFKVGIWNWHLSIERNRYLSVRLFPELSRVSKEQPPVAKFVLRVSNVGPNRRFYISPVYEKLLRTTDDCVWHVDSSFHGRFTIDVEFLDLKICPVNGGEASPVWPTDATMQSISTQTTLKCLSRMLEESILTDVIIHTADGTLSAHKAILSASSTVFKSMFHHDLMEKESSTIHIDDMSRESCMALLSYLYGNITQEEFWKHRLALLGAANKYDITDLKAACEESLMEDINSSNVLERLQEAWLYQLEKLKKGCLMYLFDFGKIYDVREEISSFFRQADRELMLEMFQEVLSVWKPV.

One can recognise a BTB domain in the interval 161–228; it reads TDVIIHTADG…LYGNITQEEF (68 aa).

As to quaternary structure, homodimer. Interacts with CUL3A and CUL3B.

It participates in protein modification; protein ubiquitination. Its function is as follows. May act as a substrate-specific adapter of an E3 ubiquitin-protein ligase complex (CUL3-RBX1-BTB) which mediates the ubiquitination and subsequent proteasomal degradation of target proteins. The polypeptide is BTB/POZ domain-containing protein At1g21780 (Arabidopsis thaliana (Mouse-ear cress)).